Reading from the N-terminus, the 519-residue chain is Apolipoprotein N-acyltransferase (519 aa).

The next 6 membrane-spanning stretches (helical) occupy residues 6–26, 47–67, 83–103, 126–146, 174–194, and 206–226; these read APLG…IWIF, LTAI…ITGV, IAAF…FVWL, LFIL…SHSI, LLSA…IDFL, and WHYF…GWLL. One can recognise a CN hydrolase domain in the interval 244-482; sequence IQGNIPNQIK…YEIHAAPIYR (239 aa). Residue E285 is the Proton acceptor of the active site. The active site involves K343. C394 serves as the catalytic Nucleophile. Residues 496–516 form a helical membrane-spanning segment; the sequence is VVFLLLVVSAIAWLYQIVFPL.

It belongs to the CN hydrolase family. Apolipoprotein N-acyltransferase subfamily.

Its subcellular location is the cell inner membrane. It catalyses the reaction N-terminal S-1,2-diacyl-sn-glyceryl-L-cysteinyl-[lipoprotein] + a glycerophospholipid = N-acyl-S-1,2-diacyl-sn-glyceryl-L-cysteinyl-[lipoprotein] + a 2-acyl-sn-glycero-3-phospholipid + H(+). It functions in the pathway protein modification; lipoprotein biosynthesis (N-acyl transfer). In terms of biological role, catalyzes the phospholipid dependent N-acylation of the N-terminal cysteine of apolipoprotein, the last step in lipoprotein maturation. This chain is Apolipoprotein N-acyltransferase, found in Synechocystis sp. (strain ATCC 27184 / PCC 6803 / Kazusa).